A 272-amino-acid chain; its full sequence is Acetylglutamate kinase (272 aa).

Residues 46–47, Arg-68, and Asn-166 contribute to the substrate site; that span reads GA.

Belongs to the acetylglutamate kinase family. ArgB subfamily.

It is found in the cytoplasm. The enzyme catalyses N-acetyl-L-glutamate + ATP = N-acetyl-L-glutamyl 5-phosphate + ADP. The protein operates within amino-acid biosynthesis; L-arginine biosynthesis; N(2)-acetyl-L-ornithine from L-glutamate: step 2/4. In terms of biological role, catalyzes the ATP-dependent phosphorylation of N-acetyl-L-glutamate. This Dehalococcoides mccartyi (strain CBDB1) protein is Acetylglutamate kinase.